Here is a 171-residue protein sequence, read N- to C-terminus: CDP-archaeol synthase (171 aa).

The next 4 helical transmembrane spans lie at 11–31 (VLYV…GLVF), 65–85 (VGLV…IGVI), 129–149 (LILV…IMLI), and 151–171 (LVLH…DVWY).

Belongs to the CDP-archaeol synthase family. The cofactor is Mg(2+).

It localises to the cell membrane. The catalysed reaction is 2,3-bis-O-(geranylgeranyl)-sn-glycerol 1-phosphate + CTP + H(+) = CDP-2,3-bis-O-(geranylgeranyl)-sn-glycerol + diphosphate. Its pathway is membrane lipid metabolism; glycerophospholipid metabolism. In terms of biological role, catalyzes the formation of CDP-2,3-bis-(O-geranylgeranyl)-sn-glycerol (CDP-archaeol) from 2,3-bis-(O-geranylgeranyl)-sn-glycerol 1-phosphate (DGGGP) and CTP. This reaction is the third ether-bond-formation step in the biosynthesis of archaeal membrane lipids. This Methanothermobacter thermautotrophicus (strain ATCC 29096 / DSM 1053 / JCM 10044 / NBRC 100330 / Delta H) (Methanobacterium thermoautotrophicum) protein is CDP-archaeol synthase.